The following is a 301-amino-acid chain: Quinolinate synthase (301 aa).

Iminosuccinate-binding residues include H21 and S38. Residue C83 coordinates [4Fe-4S] cluster. Iminosuccinate contacts are provided by residues 109–111 and S126; that span reads YIN. C169 provides a ligand contact to [4Fe-4S] cluster. Iminosuccinate contacts are provided by residues 195–197 and T212; that span reads HPE. C257 serves as a coordination point for [4Fe-4S] cluster.

It belongs to the quinolinate synthase family. Type 2 subfamily. The cofactor is [4Fe-4S] cluster.

It is found in the cytoplasm. The catalysed reaction is iminosuccinate + dihydroxyacetone phosphate = quinolinate + phosphate + 2 H2O + H(+). The protein operates within cofactor biosynthesis; NAD(+) biosynthesis; quinolinate from iminoaspartate: step 1/1. Catalyzes the condensation of iminoaspartate with dihydroxyacetone phosphate to form quinolinate. In Clostridium perfringens (strain SM101 / Type A), this protein is Quinolinate synthase.